We begin with the raw amino-acid sequence, 353 residues long: Photosystem II D2 protein (353 aa).

Threonine 2 bears the N-acetylthreonine mark. Threonine 2 is modified (phosphothreonine). Residues 41–61 (CAYFALGGWFTGTTFVTSWYT) traverse the membrane as a helical segment. Chlorophyll a is bound at residue histidine 118. A helical transmembrane segment spans residues 125–141 (GFMLRQFELARSVQLRP). Residues glutamine 130 and asparagine 143 each contribute to the pheophytin a site. The helical transmembrane segment at 153–166 (VFVSVFLIYPLGQS) threads the bilayer. Residue histidine 198 participates in chlorophyll a binding. The chain crosses the membrane as a helical span at residues 208-228 (AALLCAIHGATVENTLFEDGD). Residues histidine 215 and phenylalanine 262 each coordinate a plastoquinone. Residue histidine 215 coordinates Fe cation. Residue histidine 269 participates in Fe cation binding. Residues 279–295 (GLWMSAIGVVGLALNLR) traverse the membrane as a helical segment.

It belongs to the reaction center PufL/M/PsbA/D family. As to quaternary structure, PSII is composed of 1 copy each of membrane proteins PsbA, PsbB, PsbC, PsbD, PsbE, PsbF, PsbH, PsbI, PsbJ, PsbK, PsbL, PsbM, PsbT, PsbX, PsbY, PsbZ, Psb30/Ycf12, at least 3 peripheral proteins of the oxygen-evolving complex and a large number of cofactors. It forms dimeric complexes. Requires The D1/D2 heterodimer binds P680, chlorophylls that are the primary electron donor of PSII, and subsequent electron acceptors. It shares a non-heme iron and each subunit binds pheophytin, quinone, additional chlorophylls, carotenoids and lipids. There is also a Cl(-1) ion associated with D1 and D2, which is required for oxygen evolution. The PSII complex binds additional chlorophylls, carotenoids and specific lipids. as cofactor.

It is found in the plastid. Its subcellular location is the chloroplast thylakoid membrane. It catalyses the reaction 2 a plastoquinone + 4 hnu + 2 H2O = 2 a plastoquinol + O2. In terms of biological role, photosystem II (PSII) is a light-driven water:plastoquinone oxidoreductase that uses light energy to abstract electrons from H(2)O, generating O(2) and a proton gradient subsequently used for ATP formation. It consists of a core antenna complex that captures photons, and an electron transfer chain that converts photonic excitation into a charge separation. The D1/D2 (PsbA/PsbD) reaction center heterodimer binds P680, the primary electron donor of PSII as well as several subsequent electron acceptors. D2 is needed for assembly of a stable PSII complex. The protein is Photosystem II D2 protein of Drimys granadensis.